The chain runs to 417 residues: Gamma-glutamyl phosphate reductase (417 aa).

Belongs to the gamma-glutamyl phosphate reductase family.

Its subcellular location is the cytoplasm. It carries out the reaction L-glutamate 5-semialdehyde + phosphate + NADP(+) = L-glutamyl 5-phosphate + NADPH + H(+). The protein operates within amino-acid biosynthesis; L-proline biosynthesis; L-glutamate 5-semialdehyde from L-glutamate: step 2/2. Catalyzes the NADPH-dependent reduction of L-glutamate 5-phosphate into L-glutamate 5-semialdehyde and phosphate. The product spontaneously undergoes cyclization to form 1-pyrroline-5-carboxylate. This is Gamma-glutamyl phosphate reductase from Shigella flexneri serotype 5b (strain 8401).